A 246-amino-acid chain; its full sequence is Anamorsin homolog (246 aa).

Residues 1-124 (MRVVVVDLDG…ARGTAFSLKS (124 aa)) are N-terminal SAM-like domain. The tract at residues 125-158 (RAVRVVTADAGWGADADVDDELIDESALLTELDV) is linker. Cys168, Cys177, Cys180, and Cys182 together coordinate [2Fe-2S] cluster. Residues 168 to 182 (CDVGAGKKACKNCTC) are fe-S binding site A. Residues Cys206, Cys209, Cys217, and Cys220 each coordinate [4Fe-4S] cluster. 2 short sequence motifs (cx2C motif) span residues 206 to 209 (CGNC) and 217 to 220 (CAGC). A fe-S binding site B region spans residues 206 to 220 (CGNCALGDAFRCAGC).

It belongs to the anamorsin family. Monomer. [2Fe-2S] cluster is required as a cofactor. [4Fe-4S] cluster serves as cofactor.

The protein resides in the cytoplasm. It is found in the mitochondrion intermembrane space. Its function is as follows. Component of the cytosolic iron-sulfur (Fe-S) protein assembly (CIA) machinery. Required for the maturation of extramitochondrial Fe-S proteins. Part of an electron transfer chain functioning in an early step of cytosolic Fe-S biogenesis, facilitating the de novo assembly of a [4Fe-4S] cluster on the cytosolic Fe-S scaffold complex. Electrons are transferred from NADPH via a FAD- and FMN-containing diflavin oxidoreductase. Together with the diflavin oxidoreductase, also required for the assembly of the diferric tyrosyl radical cofactor of ribonucleotide reductase (RNR), probably by providing electrons for reduction during radical cofactor maturation in the catalytic small subunit. The protein is Anamorsin homolog of Ostreococcus tauri.